A 95-amino-acid polypeptide reads, in one-letter code: Integration host factor subunit beta (95 aa).

This sequence belongs to the bacterial histone-like protein family. In terms of assembly, heterodimer of an alpha and a beta chain.

Functionally, this protein is one of the two subunits of integration host factor, a specific DNA-binding protein that functions in genetic recombination as well as in transcriptional and translational control. This Shewanella halifaxensis (strain HAW-EB4) protein is Integration host factor subunit beta.